The primary structure comprises 35 residues: Photosystem II reaction center protein T (35 aa).

Residues 3-23 (SVAYILILTLAIGVLFFAIAF) traverse the membrane as a helical segment.

It belongs to the PsbT family. In terms of assembly, PSII is composed of 1 copy each of membrane proteins PsbA, PsbB, PsbC, PsbD, PsbE, PsbF, PsbH, PsbI, PsbJ, PsbK, PsbL, PsbM, PsbT, PsbX, PsbY, PsbZ, Psb30/Ycf12, peripheral proteins PsbO, CyanoQ (PsbQ), PsbU, PsbV and a large number of cofactors. It forms dimeric complexes.

The protein resides in the cellular thylakoid membrane. In terms of biological role, found at the monomer-monomer interface of the photosystem II (PS II) dimer, plays a role in assembly and dimerization of PSII. PSII is a light-driven water plastoquinone oxidoreductase, using light energy to abstract electrons from H(2)O, generating a proton gradient subsequently used for ATP formation. This Nostoc sp. (strain PCC 7120 / SAG 25.82 / UTEX 2576) protein is Photosystem II reaction center protein T.